A 172-amino-acid polypeptide reads, in one-letter code: MAEKRNIFLIGPMGAGKSTIGREIADRLHLEFFDSDQEIERRTGADIAWVFDLEGEEGFRKREETVIEDLSEKHGIVLATGGGSVISTNVRNHLSARGIVVYLETTIDKQVARTQRDRRRPLLQTSEEPRTVLENLAVERNPLYEDIADIIVQTDDQSAKVVAHKIIERLDF.

14-19 lines the ATP pocket; the sequence is GAGKST. Residue S18 participates in Mg(2+) binding. Substrate is bound by residues D36, R60, and G82. R120 lines the ATP pocket. Residue R140 participates in substrate binding. Position 157 (Q157) interacts with ATP.

The protein belongs to the shikimate kinase family. Monomer. The cofactor is Mg(2+).

The protein localises to the cytoplasm. The catalysed reaction is shikimate + ATP = 3-phosphoshikimate + ADP + H(+). Its pathway is metabolic intermediate biosynthesis; chorismate biosynthesis; chorismate from D-erythrose 4-phosphate and phosphoenolpyruvate: step 5/7. In terms of biological role, catalyzes the specific phosphorylation of the 3-hydroxyl group of shikimic acid using ATP as a cosubstrate. This chain is Shikimate kinase, found in Colwellia psychrerythraea (strain 34H / ATCC BAA-681) (Vibrio psychroerythus).